Consider the following 444-residue polypeptide: Methylenetetrahydrofolate--tRNA-(uracil-5-)-methyltransferase TrmFO (444 aa).

9-14 provides a ligand contact to FAD; it reads GAGMAG.

It belongs to the MnmG family. TrmFO subfamily. It depends on FAD as a cofactor.

It is found in the cytoplasm. It carries out the reaction uridine(54) in tRNA + (6R)-5,10-methylene-5,6,7,8-tetrahydrofolate + NADH + H(+) = 5-methyluridine(54) in tRNA + (6S)-5,6,7,8-tetrahydrofolate + NAD(+). The enzyme catalyses uridine(54) in tRNA + (6R)-5,10-methylene-5,6,7,8-tetrahydrofolate + NADPH + H(+) = 5-methyluridine(54) in tRNA + (6S)-5,6,7,8-tetrahydrofolate + NADP(+). In terms of biological role, catalyzes the folate-dependent formation of 5-methyl-uridine at position 54 (M-5-U54) in all tRNAs. The polypeptide is Methylenetetrahydrofolate--tRNA-(uracil-5-)-methyltransferase TrmFO (Cereibacter sphaeroides (strain ATCC 17025 / ATH 2.4.3) (Rhodobacter sphaeroides)).